The chain runs to 141 residues: Cystatin (141 aa).

The signal sequence occupies residues 1–26 (MVHSQLPVAAPLRLLCALLLLPSATM). In terms of domain architecture, Cystatin spans 29-129 (GGLYPRSVTD…CHFQVWSRPW (101 aa)). The Secondary area of contact motif lies at 73-77 (QVVTG). 2 cysteine pairs are disulfide-bonded: cysteine 91–cysteine 107 and cysteine 120–cysteine 140.

Belongs to the cystatin family. As to expression, expressed by the venom gland at an extremely low level (at protein level).

It localises to the secreted. Functionally, inhibits various C1 cysteine proteases including cathepsin L, papain and cathepsin B. This protein has no toxic activity and its function in the venom is unknown. It may play a role as a housekeeping or regulatory protein. This chain is Cystatin, found in Tropidechis carinatus (Australian rough-scaled snake).